Reading from the N-terminus, the 469-residue chain is Hydrogen cyanide synthase subunit HcnB (469 aa).

In terms of assembly, heterotrimer of HcnA, HcnB and HcnC.

Its subcellular location is the cell membrane. The catalysed reaction is glycine + 2 A = hydrogen cyanide + 2 AH2 + CO2. In terms of biological role, a three-component membrane-bound flavoenzyme that catalyzes the formation of hydrogen cyanide, a secondary metabolite, by transfer of electrons to a cyanide-resistant branch of the aerobic respiratory chain. Contributes to suppression of black root rot of tobacco. In Pseudomonas protegens (strain DSM 19095 / LMG 27888 / CFBP 6595 / CHA0), this protein is Hydrogen cyanide synthase subunit HcnB.